The sequence spans 491 residues: UDP-N-acetylmuramoyl-L-alanyl-D-glutamate--2,6-diaminopimelate ligase (491 aa).

S30 serves as a coordination point for UDP-N-acetyl-alpha-D-muramoyl-L-alanyl-D-glutamate. ATP is bound at residue 108-114 (GTNGKTT). Residues N149, 150–151 (TT), S177, Q183, and R185 each bind UDP-N-acetyl-alpha-D-muramoyl-L-alanyl-D-glutamate. K217 carries the N6-carboxylysine modification. Meso-2,6-diaminopimelate is bound by residues R383, 407–410 (DNPR), G458, and E462. The Meso-diaminopimelate recognition motif signature appears at 407–410 (DNPR).

It belongs to the MurCDEF family. MurE subfamily. Mg(2+) is required as a cofactor. In terms of processing, carboxylation is probably crucial for Mg(2+) binding and, consequently, for the gamma-phosphate positioning of ATP.

The protein localises to the cytoplasm. The enzyme catalyses UDP-N-acetyl-alpha-D-muramoyl-L-alanyl-D-glutamate + meso-2,6-diaminopimelate + ATP = UDP-N-acetyl-alpha-D-muramoyl-L-alanyl-gamma-D-glutamyl-meso-2,6-diaminopimelate + ADP + phosphate + H(+). The protein operates within cell wall biogenesis; peptidoglycan biosynthesis. Its function is as follows. Catalyzes the addition of meso-diaminopimelic acid to the nucleotide precursor UDP-N-acetylmuramoyl-L-alanyl-D-glutamate (UMAG) in the biosynthesis of bacterial cell-wall peptidoglycan. The protein is UDP-N-acetylmuramoyl-L-alanyl-D-glutamate--2,6-diaminopimelate ligase of Listeria monocytogenes serotype 4b (strain F2365).